Reading from the N-terminus, the 161-residue chain is DNA-binding protein inhibitor ID-4 (161 aa).

Residues 52 to 104 (AAEAAADEPALCLQCDMNDCYSRLRRLVPTIPPNKKVSKVEILQHVIDYILDL) form the bHLH domain.

In terms of assembly, heterodimer with other HLH proteins.

It localises to the nucleus. In terms of biological role, transcriptional regulator (lacking a basic DNA binding domain) which negatively regulates the basic helix-loop-helix (bHLH) transcription factors by forming heterodimers and inhibiting their DNA binding and transcriptional activity. Implicated in regulating a variety of cellular processes, including cellular growth, senescence, differentiation, apoptosis, angiogenesis, and neoplastic transformation. The chain is DNA-binding protein inhibitor ID-4 (Id4) from Mus musculus (Mouse).